The chain runs to 745 residues: uncharacterized protein (745 aa).

An HTH araC/xylS-type domain is found at 158-256 (NQVCDYIELH…HQTPKQYRGD (99 aa)). 2 consecutive DNA-binding regions (H-T-H motif) follow at residues 175–196 (SELS…AESL) and 223–246 (ITDI…KHIT).

This is an uncharacterized protein from Staphylococcus aureus.